The sequence spans 244 residues: HTH-type transcriptional repressor PhnF (244 aa).

In terms of domain architecture, HTH gntR-type spans 8–74; sequence RILKHQVVRA…RGRTTVVARP (67 aa). The H-T-H motif DNA-binding region spans 35-54; it reads EREIAEQFEVARETVRQALR.

The protein localises to the cytoplasm. Represses the phnDCE operon, involved in the uptake of phosphate, under conditions of phosphate availability in the cell. The chain is HTH-type transcriptional repressor PhnF (phnF) from Mycolicibacterium smegmatis (strain ATCC 700084 / mc(2)155) (Mycobacterium smegmatis).